The chain runs to 71 residues: Translational regulator CsrA (71 aa).

The interval 50-71 is disordered; sequence RIRHEKDGDVPEAAPGQGADPQ.

The protein belongs to the CsrA/RsmA family. As to quaternary structure, homodimer; the beta-strands of each monomer intercalate to form a hydrophobic core, while the alpha-helices form wings that extend away from the core.

It is found in the cytoplasm. Functionally, a key translational regulator that binds mRNA to regulate translation initiation and/or mRNA stability. Mediates global changes in gene expression, shifting from rapid growth to stress survival by linking envelope stress, the stringent response and the catabolite repression systems. Usually binds in the 5'-UTR; binding at or near the Shine-Dalgarno sequence prevents ribosome-binding, repressing translation, binding elsewhere in the 5'-UTR can activate translation and/or stabilize the mRNA. Its function is antagonized by small RNA(s). The chain is Translational regulator CsrA from Halorhodospira halophila (strain DSM 244 / SL1) (Ectothiorhodospira halophila (strain DSM 244 / SL1)).